Here is a 596-residue protein sequence, read N- to C-terminus: (E)-beta-ocimene synthase, chloroplastic (596 aa).

The N-terminal 35 residues, 1–35 (MAITHYQMASFQSSFHFCMLRKTLRQKSSLHFAKR), are a transit peptide targeting the chloroplast. Residues arginine 307, aspartate 344, aspartate 348, arginine 485, and asparagine 488 each contribute to the (2E)-geranyl diphosphate site. Aspartate 344 and aspartate 348 together coordinate Mg(2+). The short motif at 344–348 (DDIYD) is the DDXXD motif element. Mg(2+)-binding residues include asparagine 488, alanine 492, and glutamate 496.

This sequence belongs to the terpene synthase family. Tpsb subfamily. Mg(2+) is required as a cofactor. The cofactor is Mn(2+). Highly expressed in leaves, stems and disk florets. Detected in roots.

Its subcellular location is the plastid. The protein localises to the chloroplast. It catalyses the reaction (2E)-geranyl diphosphate = (E)-beta-ocimene + diphosphate. The protein operates within secondary metabolite biosynthesis; terpenoid biosynthesis. Its function is as follows. Monoterpene synthase involved in the biosynthesis of (E)-beta-ocimene as the major product and trace amounts of (Z)-beta-ocimene. Can only accept geranyl diphosphate as substrate. This chain is (E)-beta-ocimene synthase, chloroplastic, found in Matricaria chamomilla var. recutita (German chamomile).